The following is a 97-amino-acid chain: Putative membrane protein insertion efficiency factor (97 aa).

The tract at residues 72 to 97 (VPGAEPDQEQHQCTPLCNHHSEDHSQ) is disordered.

This sequence belongs to the UPF0161 family.

The protein localises to the cell inner membrane. Functionally, could be involved in insertion of integral membrane proteins into the membrane. This Alcanivorax borkumensis (strain ATCC 700651 / DSM 11573 / NCIMB 13689 / SK2) protein is Putative membrane protein insertion efficiency factor.